Consider the following 185-residue polypeptide: Crossover junction endodeoxyribonuclease RuvC (185 aa).

Active-site residues include Asp-7, Glu-66, and Asp-137. The Mg(2+) site is built by Asp-7, Glu-66, and Asp-137.

Belongs to the RuvC family. As to quaternary structure, homodimer which binds Holliday junction (HJ) DNA. The HJ becomes 2-fold symmetrical on binding to RuvC with unstacked arms; it has a different conformation from HJ DNA in complex with RuvA. In the full resolvosome a probable DNA-RuvA(4)-RuvB(12)-RuvC(2) complex forms which resolves the HJ. Mg(2+) serves as cofactor.

Its subcellular location is the cytoplasm. It catalyses the reaction Endonucleolytic cleavage at a junction such as a reciprocal single-stranded crossover between two homologous DNA duplexes (Holliday junction).. Its function is as follows. The RuvA-RuvB-RuvC complex processes Holliday junction (HJ) DNA during genetic recombination and DNA repair. Endonuclease that resolves HJ intermediates. Cleaves cruciform DNA by making single-stranded nicks across the HJ at symmetrical positions within the homologous arms, yielding a 5'-phosphate and a 3'-hydroxyl group; requires a central core of homology in the junction. The consensus cleavage sequence is 5'-(A/T)TT(C/G)-3'. Cleavage occurs on the 3'-side of the TT dinucleotide at the point of strand exchange. HJ branch migration catalyzed by RuvA-RuvB allows RuvC to scan DNA until it finds its consensus sequence, where it cleaves and resolves the cruciform DNA. This chain is Crossover junction endodeoxyribonuclease RuvC, found in Anaeromyxobacter sp. (strain K).